Consider the following 370-residue polypeptide: Pyrimidine monooxygenase RutA (370 aa).

Residues 49 to 50, asparagine 115, glutamate 124, 140 to 141, and serine 190 each bind FMN; these read IK and RY.

The protein belongs to the NtaA/SnaA/DszA monooxygenase family. RutA subfamily.

The enzyme catalyses uracil + FMNH2 + NADH + O2 = (Z)-3-ureidoacrylate + FMN + NAD(+) + H2O + H(+). It carries out the reaction thymine + FMNH2 + NADH + O2 = (Z)-2-methylureidoacrylate + FMN + NAD(+) + H2O + H(+). Its function is as follows. Catalyzes the pyrimidine ring opening between N-3 and C-4 by an unusual flavin hydroperoxide-catalyzed mechanism, adding oxygen atoms in the process to yield ureidoacrylate peracid, that immediately reacts with FMN forming ureidoacrylate and FMN-N(5)-oxide. The FMN-N(5)-oxide reacts spontaneously with NADH to produce FMN. Requires the flavin reductase RutF to regenerate FMN in vivo. This chain is Pyrimidine monooxygenase RutA, found in Variovorax paradoxus (strain S110).